The chain runs to 355 residues: Fructose-1,6-bisphosphatase (355 aa).

AMP is bound by residues 25–30 (ILDQQH) and 37–41 (TGEFS). Residues aspartate 78 and glutamate 107 each contribute to the Mg(2+) site. 121–122 (KY) serves as a coordination point for AMP. Aspartate 127, isoleucine 129, and aspartate 130 together coordinate Mg(2+). 130-133 (DGSS) is a binding site for substrate. Residue lysine 149 participates in AMP binding. Substrate is bound by residues 230–233 (NEGN), 263–268 (RYIGSM), tyrosine 284, and 294–296 (KLR). Glutamate 300 serves as a coordination point for Mg(2+).

This sequence belongs to the FBPase class 1 family. Homotetramer. The cofactor is Mg(2+).

The catalysed reaction is beta-D-fructose 1,6-bisphosphate + H2O = beta-D-fructose 6-phosphate + phosphate. The protein operates within carbohydrate biosynthesis; gluconeogenesis. With respect to regulation, subject to complex allosteric regulation. The enzyme can assume an active R-state, or an inactive T-state. Intermediate conformations may exist. AMP acts as allosteric inhibitor. AMP binding affects the turnover of bound substrate and not the affinity for substrate. The polypeptide is Fructose-1,6-bisphosphatase (FBP1) (Kluyveromyces lactis (strain ATCC 8585 / CBS 2359 / DSM 70799 / NBRC 1267 / NRRL Y-1140 / WM37) (Yeast)).